Reading from the N-terminus, the 374-residue chain is GTPase Obg (374 aa).

The 159-residue stretch at 1–159 (MKFIDEVRIH…RDLRLELRLL (159 aa)) folds into the Obg domain. The region spanning 160–333 (ADVGLLGLPN…LVYAIWQALP (174 aa)) is the OBG-type G domain. GTP-binding positions include 166-173 (GLPNAGKS), 191-195 (FTTLY), 213-216 (DIPG), 283-286 (NKSD), and 314-316 (SAA). Residues Ser173 and Thr193 each contribute to the Mg(2+) site. Residues 337–374 (PAADPTQTEDWGDESDAGERLENWEGDDLDADWEEEQV) form a disordered region. Acidic residues predominate over residues 360-374 (WEGDDLDADWEEEQV).

The protein belongs to the TRAFAC class OBG-HflX-like GTPase superfamily. OBG GTPase family. Monomer. Requires Mg(2+) as cofactor.

The protein localises to the cytoplasm. In terms of biological role, an essential GTPase which binds GTP, GDP and possibly (p)ppGpp with moderate affinity, with high nucleotide exchange rates and a fairly low GTP hydrolysis rate. Plays a role in control of the cell cycle, stress response, ribosome biogenesis and in those bacteria that undergo differentiation, in morphogenesis control. The chain is GTPase Obg from Acidithiobacillus ferrooxidans (strain ATCC 23270 / DSM 14882 / CIP 104768 / NCIMB 8455) (Ferrobacillus ferrooxidans (strain ATCC 23270)).